Consider the following 444-residue polypeptide: Tubulin beta chain (444 aa).

Residues glutamine 11, glutamate 69, serine 138, glycine 142, threonine 143, glycine 144, asparagine 204, and asparagine 226 each contribute to the GTP site. Residue glutamate 69 coordinates Mg(2+). The interval 423–444 (QQYQDATAEEEGEFDDEEEMDV) is disordered. Residues 429-444 (TAEEEGEFDDEEEMDV) show a composition bias toward acidic residues.

Belongs to the tubulin family. Dimer of alpha and beta chains. A typical microtubule is a hollow water-filled tube with an outer diameter of 25 nm and an inner diameter of 15 nM. Alpha-beta heterodimers associate head-to-tail to form protofilaments running lengthwise along the microtubule wall with the beta-tubulin subunit facing the microtubule plus end conferring a structural polarity. Microtubules usually have 13 protofilaments but different protofilament numbers can be found in some organisms and specialized cells. Mg(2+) serves as cofactor.

It localises to the cytoplasm. The protein localises to the cytoskeleton. In terms of biological role, tubulin is the major constituent of microtubules, a cylinder consisting of laterally associated linear protofilaments composed of alpha- and beta-tubulin heterodimers. Microtubules grow by the addition of GTP-tubulin dimers to the microtubule end, where a stabilizing cap forms. Below the cap, tubulin dimers are in GDP-bound state, owing to GTPase activity of alpha-tubulin. This Euplotes focardii protein is Tubulin beta chain.